A 113-amino-acid polypeptide reads, in one-letter code: Prefoldin subunit beta (113 aa).

The protein belongs to the prefoldin subunit beta family. As to quaternary structure, heterohexamer of two alpha and four beta subunits.

It is found in the cytoplasm. In terms of biological role, molecular chaperone capable of stabilizing a range of proteins. Seems to fulfill an ATP-independent, HSP70-like function in archaeal de novo protein folding. The chain is Prefoldin subunit beta from Methanococcus vannielii (strain ATCC 35089 / DSM 1224 / JCM 13029 / OCM 148 / SB).